The chain runs to 339 residues: N-acetylmuramate/N-acetylglucosamine kinase (339 aa).

This sequence belongs to the kinase AmgK family.

The enzyme catalyses N-acetyl-D-muramate + ATP = N-acetyl-alpha-D-muramate 1-phosphate + ADP + H(+). The catalysed reaction is N-acetyl-D-glucosamine + ATP = N-acetyl-alpha-D-glucosamine 1-phosphate + ADP + H(+). Its pathway is cell wall biogenesis; peptidoglycan recycling. In terms of biological role, sugar kinase that catalyzes the ATP-dependent phosphorylation of N-acetylmuramate (MurNAc) and N-acetylglucosamine (GlcNAc) at its C1 hydroxyl group, leading to MurNAc alpha-1P and GlcNAc alpha-1P, respectively. Is involved in peptidoglycan recycling as part of a cell wall recycling pathway that bypasses de novo biosynthesis of the peptidoglycan precursor UDP-MurNAc. Plays a role in intrinsic resistance to fosfomycin, which targets the de novo synthesis of UDP-MurNAc. Is also able to use N-acetylgalactosamine (GalNAc) as a substrate, but not N-acetylmannosamine, N-deacetylated sugars or glucose. In Pseudomonas putida (strain ATCC 47054 / DSM 6125 / CFBP 8728 / NCIMB 11950 / KT2440), this protein is N-acetylmuramate/N-acetylglucosamine kinase.